A 100-amino-acid chain; its full sequence is NADH-quinone oxidoreductase subunit K (100 aa).

A run of 3 helical transmembrane segments spans residues 4–24 (LQHG…GLVI), 28–48 (LLFM…AFVV), and 60–80 (VMYI…LALL).

It belongs to the complex I subunit 4L family. NDH-1 is composed of 13 different subunits. Subunits NuoA, H, J, K, L, M, N constitute the membrane sector of the complex.

It localises to the cell inner membrane. The enzyme catalyses a quinone + NADH + 5 H(+)(in) = a quinol + NAD(+) + 4 H(+)(out). Its function is as follows. NDH-1 shuttles electrons from NADH, via FMN and iron-sulfur (Fe-S) centers, to quinones in the respiratory chain. The immediate electron acceptor for the enzyme in this species is believed to be ubiquinone. Couples the redox reaction to proton translocation (for every two electrons transferred, four hydrogen ions are translocated across the cytoplasmic membrane), and thus conserves the redox energy in a proton gradient. In Citrobacter koseri (strain ATCC BAA-895 / CDC 4225-83 / SGSC4696), this protein is NADH-quinone oxidoreductase subunit K.